We begin with the raw amino-acid sequence, 192 residues long: 3-isopropylmalate dehydratase small subunit (192 aa).

It belongs to the LeuD family. LeuD type 1 subfamily. In terms of assembly, heterodimer of LeuC and LeuD.

It catalyses the reaction (2R,3S)-3-isopropylmalate = (2S)-2-isopropylmalate. Its pathway is amino-acid biosynthesis; L-leucine biosynthesis; L-leucine from 3-methyl-2-oxobutanoate: step 2/4. Functionally, catalyzes the isomerization between 2-isopropylmalate and 3-isopropylmalate, via the formation of 2-isopropylmaleate. In Oceanobacillus iheyensis (strain DSM 14371 / CIP 107618 / JCM 11309 / KCTC 3954 / HTE831), this protein is 3-isopropylmalate dehydratase small subunit.